Reading from the N-terminus, the 253-residue chain is Tryptophan synthase alpha chain (253 aa).

Catalysis depends on proton acceptor residues Glu46 and Asp57.

Belongs to the TrpA family. As to quaternary structure, tetramer of two alpha and two beta chains.

It catalyses the reaction (1S,2R)-1-C-(indol-3-yl)glycerol 3-phosphate + L-serine = D-glyceraldehyde 3-phosphate + L-tryptophan + H2O. It participates in amino-acid biosynthesis; L-tryptophan biosynthesis; L-tryptophan from chorismate: step 5/5. The alpha subunit is responsible for the aldol cleavage of indoleglycerol phosphate to indole and glyceraldehyde 3-phosphate. The chain is Tryptophan synthase alpha chain from Dictyoglomus thermophilum (strain ATCC 35947 / DSM 3960 / H-6-12).